A 326-amino-acid chain; its full sequence is Polycomb complex protein BMI-1 (326 aa).

The RING-type zinc-finger motif lies at 18–57 (CVLCGGYFIDATTIIECLHSFCKTCIVRYLETSKYCPICD). Residues 81-95 (KLVPGLFKNEMKRRR) carry the Nuclear localization signal motif. An interaction with PHC2 region spans residues 162-182 (RYLRCPAAMTVMHLRKFLRSK). Residues 164 to 228 (LRCPAAMTVM…GPLPLKYRVR (65 aa)) are interaction with E4F1. The disordered stretch occupies residues 236–326 (ISHQRDGLTN…VNGSSATSSG (91 aa)). Over residues 266-278 (PSTSSCLPSPSTP) the composition is skewed to low complexity. Residues 279 to 309 (VQSPHPQFPHISSTMNGTSNSPSGNHQSSFA) show a composition bias toward polar residues. The segment covering 315–326 (SSVNGSSATSSG) has biased composition (low complexity).

Component of a PRC1-like complex. Identified in a PRC1-like HPRC-H complex with CBX2, CBX4, CBX8, PHC1, PHC2, PHC3 RING1 and RNF2. Interacts with RNF2/RING2. Interacts with RING1. Part of a complex that contains RNF2, UB2D3 and BMI1, where RNF2 and BMI1 form a tight heterodimer, and UB2D3 interacts only with RNF2. The complex composed of RNF2, UB2D3 and BMI1 binds nucleosomes, and has activity only with nucleosomal histone H2A. Interacts with CBX7 and CBX8. Interacts with SPOP. Part of a complex consisting of BMI1, CUL3 and SPOP. Interacts with E4F1. Interacts with PHC2. Interacts with zinc finger protein ZNF277. May be part of a complex including at least ZNF277, BMI1 and RNF2/RING2. Monoubiquitinated. May be polyubiquitinated; which does not lead to proteasomal degradation.

The protein localises to the nucleus. It localises to the cytoplasm. Component of a Polycomb group (PcG) multiprotein PRC1-like complex, a complex class required to maintain the transcriptionally repressive state of many genes, including Hox genes, throughout development. PcG PRC1 complex acts via chromatin remodeling and modification of histones; it mediates monoubiquitination of histone H2A 'Lys-119', rendering chromatin heritably changed in its expressibility. The complex composed of RNF2, UB2D3 and BMI1 binds nucleosomes, and has activity only with nucleosomal histone H2A. In the PRC1-like complex, regulates the E3 ubiquitin-protein ligase activity of RNF2/RING2. The polypeptide is Polycomb complex protein BMI-1 (BMI1) (Homo sapiens (Human)).